A 706-amino-acid polypeptide reads, in one-letter code: Lysophospholipase 2 (706 aa).

The signal sequence occupies residues 1 to 19; that stretch reads MQLRNILQASSLISGLSLA. A PLA2c domain is found at 36–588; that stretch reads PCPSDDTSLV…ADYCWNGTLS (553 aa). 25 N-linked (GlcNAc...) asparagine glycosylation sites follow: N47, N80, N94, N125, N162, N181, N193, N217, N279, N309, N365, N390, N491, N515, N524, N543, N567, N584, N598, N630, N634, N642, N648, N652, and N658. The interval 627 to 672 is disordered; that stretch reads TSGNTTSNSTTSTSSNVTSNSNSSSNTTLNSNSSSSSISSSTARSS. Residue N680 is the site of GPI-anchor amidated asparagine attachment. Positions 681–706 are cleaved as a propeptide — removed in mature form; that stretch reads AAAISYANTNTLMSLLGAITALFGLI.

The protein belongs to the lysophospholipase family. The GPI-anchor is attached to the protein in the endoplasmic reticulum and serves to target the protein to the cell surface. There, the glucosamine-inositol phospholipid moiety is cleaved off and the GPI-modified mannoprotein is covalently attached via its lipidless GPI glycan remnant to the 1,6-beta-glucan of the outer cell wall layer.

It is found in the secreted. It localises to the cell wall. The protein localises to the membrane. It catalyses the reaction a 1-acyl-sn-glycero-3-phosphocholine + H2O = sn-glycerol 3-phosphocholine + a fatty acid + H(+). The catalysed reaction is 1-hexadecanoyl-sn-glycero-3-phosphoethanolamine + H2O = sn-glycero-3-phosphoethanolamine + hexadecanoate + H(+). It carries out the reaction 1-hexadecanoyl-sn-glycero-3-phosphocholine + H2O = sn-glycerol 3-phosphocholine + hexadecanoate + H(+). The enzyme catalyses 1-hexadecanoyl-sn-glycero-3-phospho-L-serine + H2O = sn-glycero-3-phospho-L-serine + hexadecanoate + H(+). It catalyses the reaction 1,2-dihexadecanoyl-sn-glycero-3-phosphocholine + H2O = 1-hexadecanoyl-sn-glycero-3-phosphocholine + hexadecanoate + H(+). Functionally, sequentially removes both fatty acyl groups from diacylglycerophospholipids and therefore has both phospholipase A and lysophospholipase activities. However, it does not display transacylase activity. Substrate preference is phosphatidylserine &gt; phosphatidylinositol &gt; phosphatidylcholine &gt; phosphatidylethanolamine. The substrate specificity is pH- and ion-dependent. In contrast with activities observed at optimum pH 3.5, the order of substrate preference at pH 5.5 is phosphatidylserine = phosphatidylethanolamine &gt; phosphatidylcholine &gt; phosphatidylinositol. The polypeptide is Lysophospholipase 2 (PLB2) (Saccharomyces cerevisiae (strain ATCC 204508 / S288c) (Baker's yeast)).